The sequence spans 300 residues: Probable phytol kinase, chloroplastic (300 aa).

The N-terminal 36 residues, 1-36 (MAAARPALPSSPTSLLLARSTSAPDLAARRPRRWLV), are a transit peptide targeting the chloroplast. The next 7 membrane-spanning stretches (helical) occupy residues 60–78 (LLRD…YSLV), 98–118 (VVHV…SNST), 122–142 (FFAA…GLGF), 168–188 (YVIV…IGIV), 227–247 (FISG…LGYI), 254–274 (ALGK…IPVT), and 276–296 (VVDD…LLFG).

The protein belongs to the polyprenol kinase family.

It is found in the plastid. It localises to the chloroplast membrane. It carries out the reaction phytol + CTP = phytyl phosphate + CDP + H(+). It participates in cofactor biosynthesis; tocopherol biosynthesis. Its function is as follows. Involved in the activation and reutilization of phytol from chlorophyll degradation in plant metabolism, including tocopherol biosynthesis. Catalyzes the conversion of phytol to phytol monophosphate (PMP). The chain is Probable phytol kinase, chloroplastic from Triticum aestivum (Wheat).